A 116-amino-acid polypeptide reads, in one-letter code: Small ribosomal subunit protein uS13 (116 aa).

Positions 92–116 (RRGLPVRGQNTKNNARTRKGAKRSR) are disordered. The span at 106–116 (ARTRKGAKRSR) shows a compositional bias: basic residues.

This sequence belongs to the universal ribosomal protein uS13 family. Part of the 30S ribosomal subunit. Forms a loose heterodimer with protein S19. Forms two bridges to the 50S subunit in the 70S ribosome.

Its function is as follows. Located at the top of the head of the 30S subunit, it contacts several helices of the 16S rRNA. In the 70S ribosome it contacts the 23S rRNA (bridge B1a) and protein L5 of the 50S subunit (bridge B1b), connecting the 2 subunits; these bridges are implicated in subunit movement. Contacts the tRNAs in the A and P-sites. This is Small ribosomal subunit protein uS13 from Lactobacillus delbrueckii subsp. bulgaricus (strain ATCC 11842 / DSM 20081 / BCRC 10696 / JCM 1002 / NBRC 13953 / NCIMB 11778 / NCTC 12712 / WDCM 00102 / Lb 14).